The following is a 193-amino-acid chain: dCTP deaminase (193 aa).

Residues 110–115, Asp-128, 136–138, Tyr-171, Lys-178, and Gln-182 contribute to the dCTP site; these read RSSLAR and VLE. The Proton donor/acceptor role is filled by Glu-138. Residues 169-193 are disordered; that stretch reads RPYNRREDAKYRNQQGAVASRIDKD.

The protein belongs to the dCTP deaminase family. As to quaternary structure, homotrimer.

The enzyme catalyses dCTP + H2O + H(+) = dUTP + NH4(+). Its pathway is pyrimidine metabolism; dUMP biosynthesis; dUMP from dCTP (dUTP route): step 1/2. Catalyzes the deamination of dCTP to dUTP. This chain is dCTP deaminase, found in Escherichia coli O8 (strain IAI1).